A 112-amino-acid polypeptide reads, in one-letter code: Prostatic steroid-binding protein C2 (112 aa).

Positions 1-20 are cleaved as a signal peptide; it reads MRLSLCLLTILVVCCYEANG. A Pyrrolidone carboxylic acid modification is found at Gln-21.

This sequence belongs to the secretoglobin family. Lipophilin subfamily. Prostatein is composed of three different peptides called C1, C2 and C3. These form covalent C1:C3 (F) and C2:C3 (S) heterodimers whose noncovalent association forms tetrameric (C1:C3/C3:C2) prostatein molecules. In terms of processing, linked by three disulfide bonds to C3. The N-terminus is blocked.

The protein localises to the secreted. Part of prostatein which is the major secretory glycoprotein of ventral prostate gland. In Rattus norvegicus (Rat), this protein is Prostatic steroid-binding protein C2 (Psbpc2).